The following is a 682-amino-acid chain: Methionine--tRNA ligase (682 aa).

Positions 14 to 24 (PYANGPVHLGH) match the 'HIGH' region motif. Zn(2+) contacts are provided by Cys-145, Cys-148, Cys-158, and Cys-161. The 'KMSKS' region signature appears at 331–335 (KMSKS). An ATP-binding site is contributed by Lys-334. The tRNA-binding domain occupies 580-682 (AFAAVDLRVA…SGAKPGQRIK (103 aa)).

The protein belongs to the class-I aminoacyl-tRNA synthetase family. MetG type 1 subfamily. Homodimer. The cofactor is Zn(2+).

Its subcellular location is the cytoplasm. It carries out the reaction tRNA(Met) + L-methionine + ATP = L-methionyl-tRNA(Met) + AMP + diphosphate. Its function is as follows. Is required not only for elongation of protein synthesis but also for the initiation of all mRNA translation through initiator tRNA(fMet) aminoacylation. This chain is Methionine--tRNA ligase, found in Pseudomonas syringae pv. tomato (strain ATCC BAA-871 / DC3000).